A 372-amino-acid polypeptide reads, in one-letter code: Glutamate 5-kinase (372 aa).

Lysine 14 provides a ligand contact to ATP. The substrate site is built by serine 54, aspartate 141, and asparagine 153. 173–174 (TD) serves as a coordination point for ATP. The PUA domain occupies 280-358 (RGTLVLDAGA…DAIESLLGYS (79 aa)).

Belongs to the glutamate 5-kinase family.

It localises to the cytoplasm. It carries out the reaction L-glutamate + ATP = L-glutamyl 5-phosphate + ADP. It participates in amino-acid biosynthesis; L-proline biosynthesis; L-glutamate 5-semialdehyde from L-glutamate: step 1/2. Functionally, catalyzes the transfer of a phosphate group to glutamate to form L-glutamate 5-phosphate. The polypeptide is Glutamate 5-kinase (Pseudomonas putida (strain W619)).